The following is a 120-amino-acid chain: Large ribosomal subunit protein uL18 (120 aa).

Belongs to the universal ribosomal protein uL18 family. In terms of assembly, part of the 50S ribosomal subunit; part of the 5S rRNA/L5/L18/L25 subcomplex. Contacts the 5S and 23S rRNAs.

This is one of the proteins that bind and probably mediate the attachment of the 5S RNA into the large ribosomal subunit, where it forms part of the central protuberance. The protein is Large ribosomal subunit protein uL18 of Bradyrhizobium sp. (strain BTAi1 / ATCC BAA-1182).